A 354-amino-acid polypeptide reads, in one-letter code: COP9 signalosome complex subunit 5 (354 aa).

Positions valine 56 to aspartate 193 constitute an MPN domain. Zn(2+) is bound by residues histidine 139, histidine 141, and aspartate 152. A JAMM motif motif is present at residues histidine 139–aspartate 152. Residues aspartate 193–serine 212 form a disordered region.

Belongs to the peptidase M67A family. CSN5 subfamily. As to quaternary structure, component of the COP9 signalosome (CSN) complex.

It is found in the cytoplasm. Its subcellular location is the nucleus. Functionally, catalytic Component of the COP9 signalosome (CSN) complex that acts as an regulator of the ubiquitin (Ubl) conjugation pathway by mediating the deneddylation of the cullin subunit of SCF-type E3 ubiquitin-protein ligase complexes. The polypeptide is COP9 signalosome complex subunit 5 (RRI1) (Yarrowia lipolytica (strain CLIB 122 / E 150) (Yeast)).